The chain runs to 370 residues: Flagellar P-ring protein 1 (370 aa).

Residues 1–25 form the signal peptide; that stretch reads MSVLIKTRHCFVLLGLWLVLPTASA.

This sequence belongs to the FlgI family. The basal body constitutes a major portion of the flagellar organelle and consists of four rings (L,P,S, and M) mounted on a central rod.

It localises to the periplasm. The protein resides in the bacterial flagellum basal body. Functionally, assembles around the rod to form the L-ring and probably protects the motor/basal body from shearing forces during rotation. The protein is Flagellar P-ring protein 1 of Yersinia pestis.